The chain runs to 170 residues: Lipoprotein signal peptidase (170 aa).

3 consecutive transmembrane segments (helical) span residues 9–29, 72–92, and 94–114; these read FNIF…KYLV, IFFL…SLKE, and NCIA…NVID. Catalysis depends on residues Asp124 and Asp146. Residues 143 to 163 form a helical membrane-spanning segment; that stretch reads NFADSYVVIGMILFLVYDFFI.

The protein belongs to the peptidase A8 family.

The protein localises to the cell inner membrane. It carries out the reaction Release of signal peptides from bacterial membrane prolipoproteins. Hydrolyzes -Xaa-Yaa-Zaa-|-(S,diacylglyceryl)Cys-, in which Xaa is hydrophobic (preferably Leu), and Yaa (Ala or Ser) and Zaa (Gly or Ala) have small, neutral side chains.. Its pathway is protein modification; lipoprotein biosynthesis (signal peptide cleavage). This protein specifically catalyzes the removal of signal peptides from prolipoproteins. The polypeptide is Lipoprotein signal peptidase (Borreliella burgdorferi (strain ATCC 35210 / DSM 4680 / CIP 102532 / B31) (Borrelia burgdorferi)).